A 140-amino-acid polypeptide reads, in one-letter code: Small ribosomal subunit protein uS12 (140 aa).

Position 102 is a 3-methylthioaspartic acid (aspartate 102).

The protein belongs to the universal ribosomal protein uS12 family. In terms of assembly, part of the 30S ribosomal subunit. Contacts proteins S8 and S17. May interact with IF1 in the 30S initiation complex.

With S4 and S5 plays an important role in translational accuracy. Its function is as follows. Interacts with and stabilizes bases of the 16S rRNA that are involved in tRNA selection in the A site and with the mRNA backbone. Located at the interface of the 30S and 50S subunits, it traverses the body of the 30S subunit contacting proteins on the other side and probably holding the rRNA structure together. The combined cluster of proteins S8, S12 and S17 appears to hold together the shoulder and platform of the 30S subunit. In Geobacillus sp. (strain WCH70), this protein is Small ribosomal subunit protein uS12.